Consider the following 454-residue polypeptide: MLSSQTSSIFTVSRLNQTVRLLLEQEMGQVWISGEISNFTQPASGHWYFTLKDDTAQVRCAMFRNSNRRVTFRPQHGQQVLVRANITLYEPRGDYQIIVESMQPAGEGLLQQKYEQLKAKLQAEGLFDQQYKHPLPSPAYCVGVITSKTGAALHDILHVLKRRDPSLPVIIYPAAVQGEDAPGQIVRAITLANARKECDVLIVGRGGGSLEDLWSFNDERVARAIFASTIPVVSAVGHETDVTIADFVADLRAPTPSAAAEVVSRNQQELLRQMQTACQRLEMAMDYYLANRQRRFSQLYHRLQQQHPQLRLARQQTTLERLRQRMHLALENQLKQANQRQQRASQRLRQQNPQPRIHRAQSRIQQLEYRLAENFRARLSEQRERFGNTVTHLEAVSPLATLARGYSVSTATDGNVLKKVKQLKVGDMMTTRLKDGWVTSEVTAIKPVKKIRLG.

The segment covering 337–352 (ANQRQQRASQRLRQQN) has biased composition (low complexity). The disordered stretch occupies residues 337–359 (ANQRQQRASQRLRQQNPQPRIHR).

Belongs to the XseA family. As to quaternary structure, heterooligomer composed of large and small subunits.

The protein resides in the cytoplasm. It carries out the reaction Exonucleolytic cleavage in either 5'- to 3'- or 3'- to 5'-direction to yield nucleoside 5'-phosphates.. Functionally, bidirectionally degrades single-stranded DNA into large acid-insoluble oligonucleotides, which are then degraded further into small acid-soluble oligonucleotides. The protein is Exodeoxyribonuclease 7 large subunit of Salmonella arizonae (strain ATCC BAA-731 / CDC346-86 / RSK2980).